We begin with the raw amino-acid sequence, 341 residues long: S-adenosylmethionine:tRNA ribosyltransferase-isomerase (341 aa).

It belongs to the QueA family. Monomer.

The protein resides in the cytoplasm. It catalyses the reaction 7-aminomethyl-7-carbaguanosine(34) in tRNA + S-adenosyl-L-methionine = epoxyqueuosine(34) in tRNA + adenine + L-methionine + 2 H(+). Its pathway is tRNA modification; tRNA-queuosine biosynthesis. Transfers and isomerizes the ribose moiety from AdoMet to the 7-aminomethyl group of 7-deazaguanine (preQ1-tRNA) to give epoxyqueuosine (oQ-tRNA). The protein is S-adenosylmethionine:tRNA ribosyltransferase-isomerase of Citrifermentans bemidjiense (strain ATCC BAA-1014 / DSM 16622 / JCM 12645 / Bem) (Geobacter bemidjiensis).